The following is a 488-amino-acid chain: Protein DETOXIFICATION 35 (488 aa).

Transmembrane regions (helical) follow at residues 38–58 (LWMI…VSSV), 73–93 (AVSI…LGMG), 121–141 (IILF…TPVL), 150–170 (IAVP…SLAF), 187–207 (IAWI…LFII), 218–238 (LAFN…VIGW), 262–282 (IASA…IVLT), 296–316 (SICM…NAAI), 336–356 (VYVT…AIII), 379–401 (AYLL…VAVG), 408–428 (VAYI…YLLG), and 439–459 (WSGM…VLYK).

It belongs to the multi antimicrobial extrusion (MATE) (TC 2.A.66.1) family. Highly expressed in inflorescence tissues, especially in floral epidermal guard cells including those of the anthers, stigma, siliques and nectaries. Also detected in the meristematic zone of the root apex and in the elongation zone through to the fully expanded cells of the differentiation zone.

It is found in the vacuole membrane. In terms of biological role, multidrug and toxin efflux transporter involved in flavonoid metabolism. Required for proper reproductive development. This Arabidopsis thaliana (Mouse-ear cress) protein is Protein DETOXIFICATION 35.